The sequence spans 345 residues: Biotin synthase (345 aa).

The 219-residue stretch at 38 to 256 (RQVQVSTLLS…IAVARIMMPS (219 aa)) folds into the Radical SAM core domain. Positions 53, 57, and 60 each coordinate [4Fe-4S] cluster. [2Fe-2S] cluster-binding residues include Cys97, Cys128, Cys188, and Arg260.

The protein belongs to the radical SAM superfamily. Biotin synthase family. As to quaternary structure, homodimer. [4Fe-4S] cluster serves as cofactor. It depends on [2Fe-2S] cluster as a cofactor.

It catalyses the reaction (4R,5S)-dethiobiotin + (sulfur carrier)-SH + 2 reduced [2Fe-2S]-[ferredoxin] + 2 S-adenosyl-L-methionine = (sulfur carrier)-H + biotin + 2 5'-deoxyadenosine + 2 L-methionine + 2 oxidized [2Fe-2S]-[ferredoxin]. Its pathway is cofactor biosynthesis; biotin biosynthesis; biotin from 7,8-diaminononanoate: step 2/2. Functionally, catalyzes the conversion of dethiobiotin (DTB) to biotin by the insertion of a sulfur atom into dethiobiotin via a radical-based mechanism. The polypeptide is Biotin synthase (Yersinia pseudotuberculosis serotype O:1b (strain IP 31758)).